The sequence spans 203 residues: Akirin-2 (203 aa).

A phosphoserine mark is found at Ser18 and Ser21. A Nuclear localization signal motif is present at residues 22–27; it reads PKRRRC. Ser57 is modified (phosphoserine). The SYVS motif signature appears at 200–203; the sequence is SYVS.

The protein belongs to the akirin family. As to quaternary structure, homodimer. Interacts with IPO9; the interaction is direct. Associates (via SYVS motif) with 20S and 26S proteasomes. Interacts with SMARCD1; promoting SWI/SNF complex recruitment. Interacts with NFKBIZ. Interacts with YWHAB. In terms of processing, polyubiquitinated. Polyubiquitination is dependent of UBR5 that extends pre-ubiquitinated AKIRIN2. Widely expressed with the highest expression in peripheral blood leukocytes.

The protein resides in the nucleus. Its subcellular location is the cytoplasm. It is found in the membrane. Functionally, molecular adapter that acts as a bridge between a variety of multiprotein complexes, and which is involved in embryonic development, immunity, myogenesis and brain development. Plays a key role in nuclear protein degradation by promoting import of proteasomes into the nucleus: directly binds to fully assembled 20S proteasomes at one end and to nuclear import receptor IPO9 at the other end, bridging them together and mediating the import of pre-assembled proteasome complexes through the nuclear pore. Involved in innate immunity by regulating the production of interleukin-6 (IL6) downstream of Toll-like receptor (TLR): acts by bridging the NF-kappa-B inhibitor NFKBIZ and the SWI/SNF complex, leading to promote induction of IL6. Also involved in adaptive immunity by promoting B-cell activation. Involved in brain development: required for the survival and proliferation of cerebral cortical progenitor cells. Involved in myogenesis: required for skeletal muscle formation and skeletal development, possibly by regulating expression of muscle differentiation factors. Also plays a role in facilitating interdigital tissue regression during limb development. The chain is Akirin-2 from Homo sapiens (Human).